Here is a 253-residue protein sequence, read N- to C-terminus: Imidazole glycerol phosphate synthase subunit HisF (253 aa).

Active-site residues include Asp-11 and Asp-130.

Belongs to the HisA/HisF family. In terms of assembly, heterodimer of HisH and HisF.

The protein localises to the cytoplasm. It carries out the reaction 5-[(5-phospho-1-deoxy-D-ribulos-1-ylimino)methylamino]-1-(5-phospho-beta-D-ribosyl)imidazole-4-carboxamide + L-glutamine = D-erythro-1-(imidazol-4-yl)glycerol 3-phosphate + 5-amino-1-(5-phospho-beta-D-ribosyl)imidazole-4-carboxamide + L-glutamate + H(+). The protein operates within amino-acid biosynthesis; L-histidine biosynthesis; L-histidine from 5-phospho-alpha-D-ribose 1-diphosphate: step 5/9. IGPS catalyzes the conversion of PRFAR and glutamine to IGP, AICAR and glutamate. The HisF subunit catalyzes the cyclization activity that produces IGP and AICAR from PRFAR using the ammonia provided by the HisH subunit. The protein is Imidazole glycerol phosphate synthase subunit HisF of Paracoccus denitrificans (strain Pd 1222).